We begin with the raw amino-acid sequence, 424 residues long: MELSYRLFICLLLWGSTELCYPQPLWLLQGGASHPETSVQPVLVECQEATLMVMVSKDLFGTGKLIRAADLTLGPEACEPLVSMDTEDVVRFEVGLHECGNSMQVTDDALVYSTFLLHDPRPVGNLSIVRTNRAEIPIECRYPRQGNVSSQAILPTWLPFRTTVFSEEKLTFSLRLMEENWNAEKRSPTFHLGDAAHLQAEIHTGSHVPLRLFVDHCVATPTPDQNASPYHTIVDFHGCLVDGLTDASSAFKVPRPGPDTLQFTVDVFHFANDSRNMIYITCHLKVTLAEQDPDELNKACSFSKPSNSWFPVEGSADICQCCNKGDCGTPSHSRRQPHVMSQWSRSASRNRRHVTEEADVTVGPLIFLDRRGDHEVEQWALPSDTSVVLLGVGLAVVVSLTLTAVILVLTRRCRTASHPVSASE.

The signal sequence occupies residues 1 to 22 (MELSYRLFICLLLWGSTELCYP). Q23 bears the Pyrrolidone carboxylic acid mark. Residues 23–387 (QPLWLLQGGA…QWALPSDTSV (365 aa)) lie on the Extracellular side of the membrane. Positions 45-307 (ECQEATLMVM…KACSFSKPSN (263 aa)) constitute a ZP domain. 2 disulfide bridges follow: C46-C140 and C78-C99. N125 and N147 each carry an N-linked (GlcNAc...) asparagine glycan. Residues T156, T162, and T163 are each glycosylated (O-linked (GalNAc...) threonine). Intrachain disulfides connect C217/C282 and C239/C300. N-linked (GlcNAc...) asparagine glycosylation is present at N272. Positions 330-356 (PSHSRRQPHVMSQWSRSASRNRRHVTE) are disordered. Positions 351–424 (RRHVTEEADV…TASHPVSASE (74 aa)) are cleaved as a propeptide — removed in mature form. The chain crosses the membrane as a helical span at residues 388-408 (VLLGVGLAVVVSLTLTAVILV). At 409–424 (LTRRCRTASHPVSASE) the chain is on the cytoplasmic side.

This sequence belongs to the ZP domain family. ZPC subfamily. As to quaternary structure, polymers of ZP2 and ZP3 organized into long filaments cross-linked by ZP1 homodimers. Interacts with ZP1 and ZP2. Post-translationally, proteolytically cleaved before the transmembrane segment to yield the secreted ectodomain incorporated in the zona pellucida. In terms of processing, N-glycosylated. O-glycosylated; removal of O-linked glycans may play an important role in the post-fertilization block to polyspermy. As to expression, expressed in oocytes (at protein level).

It localises to the zona pellucida. The protein localises to the cell membrane. Its function is as follows. Component of the zona pellucida, an extracellular matrix surrounding oocytes which mediates sperm binding, induction of the acrosome reaction and prevents post-fertilization polyspermy. The zona pellucida is composed of 3 to 4 glycoproteins, ZP1, ZP2, ZP3, and ZP4. ZP3 is essential for sperm binding and zona matrix formation. This Homo sapiens (Human) protein is Zona pellucida sperm-binding protein 3 (ZP3).